Consider the following 155-residue polypeptide: Small ribosomal subunit protein uS7c (155 aa).

This sequence belongs to the universal ribosomal protein uS7 family. As to quaternary structure, part of the 30S ribosomal subunit.

It localises to the plastid. It is found in the chloroplast. One of the primary rRNA binding proteins, it binds directly to 16S rRNA where it nucleates assembly of the head domain of the 30S subunit. This Stewartia pseudocamellia (Japanese stewartia) protein is Small ribosomal subunit protein uS7c (rps7).